Consider the following 162-residue polypeptide: Protein-export protein SecB (162 aa).

This sequence belongs to the SecB family. Homotetramer, a dimer of dimers. One homotetramer interacts with 1 SecA dimer.

It is found in the cytoplasm. One of the proteins required for the normal export of preproteins out of the cell cytoplasm. It is a molecular chaperone that binds to a subset of precursor proteins, maintaining them in a translocation-competent state. It also specifically binds to its receptor SecA. The sequence is that of Protein-export protein SecB from Pseudomonas savastanoi pv. phaseolicola (strain 1448A / Race 6) (Pseudomonas syringae pv. phaseolicola (strain 1448A / Race 6)).